The sequence spans 483 residues: Serralysin (483 aa).

A Zn(2+)-binding site is contributed by H184. Residue E185 is part of the active site. Residues H188 and H194 each coordinate Zn(2+). Residues R263, D266, D295, G297, G298, D300, T337, and E339 each contribute to the Ca(2+) site. Hemolysin-type calcium-binding repeat units lie at residues 342–359 (IGGSGNDILIGNDAENIL) and 360–377 (KGGAGDDIIYGGLGADQL).

This sequence belongs to the peptidase M10B family. It depends on Zn(2+) as a cofactor. The cofactor is Ca(2+).

Its subcellular location is the secreted. The catalysed reaction is Preferential cleavage of bonds with hydrophobic residues in P1'.. Its activity is regulated as follows. Inhibited by 8 mM 1,10-phenanthroline and 10 mM EDTA, but not by PMSF. Its function is as follows. Involved in the inhibition of insect antibacterial peptides. Reduces the antibacterial activity of G.mellonella hemolymph by 50%. Reduces the antibacterial activity of cecropin A by 80% and cecropin B by 75%. This chain is Serralysin, found in Photorhabdus sp. (strain Az29).